Here is a 489-residue protein sequence, read N- to C-terminus: Pup--protein ligase (489 aa).

Glutamate 25 serves as a coordination point for Mg(2+). Residue arginine 69 participates in ATP binding. Position 71 (tyrosine 71) interacts with Mg(2+). Aspartate 73 serves as the catalytic Proton acceptor. Position 79 (glutamate 79) interacts with Mg(2+). Positions 82 and 447 each coordinate ATP.

The protein belongs to the Pup ligase/Pup deamidase family. Pup-conjugating enzyme subfamily.

The catalysed reaction is ATP + [prokaryotic ubiquitin-like protein]-L-glutamate + [protein]-L-lysine = ADP + phosphate + N(6)-([prokaryotic ubiquitin-like protein]-gamma-L-glutamyl)-[protein]-L-lysine.. Its pathway is protein degradation; proteasomal Pup-dependent pathway. The protein operates within protein modification; protein pupylation. Catalyzes the covalent attachment of the prokaryotic ubiquitin-like protein modifier Pup to the proteasomal substrate proteins, thereby targeting them for proteasomal degradation. This tagging system is termed pupylation. The ligation reaction involves the side-chain carboxylate of the C-terminal glutamate of Pup and the side-chain amino group of a substrate lysine. The chain is Pup--protein ligase from Corynebacterium efficiens (strain DSM 44549 / YS-314 / AJ 12310 / JCM 11189 / NBRC 100395).